The sequence spans 504 residues: MKNEKRKTGMEPKVFFPPLIIVGILCWLTVRDLDAANVVINAVFSYVTNVWGWAFEWYMVVMLFGWFWLVFGPYAKKRLGNEPPEFSTASWIFMMFASCTSAAVLFWGSIEIYYYISTPPFGLEPNSTGAKELGLAYSLFHWGPLPWATYSFLSVAFAYFFFVRKMEVIRPSSTLVPLVGEKHAKGLFGTIVDNFYLVALIFAMGTSLGLATPLVTECMQWLFGIPHTLQLDAIIITCWIILNAICVACGLQKGGRIASDVPSYLSFLMLGWVFIVSGASFIMNYFTDSVGMLLMYLPRMLFYTDPIAKGGFPQGWSVFYWAWWVIYAIQMSIFLARISRGRTVRELCFGMVLGLTASTWILWTVLGSNTLLLIDKNIINIPNLIEQYGVARAIIETWAALPLSTATMWGFFILCFIATVTLVNACSYTLAMSTCREVRGGEEPPLLVRIGWSILVGIIGIVLLALGGLKPIQTAIIAGGCPLFFVNIMVTLSFIKDAKQNWKD.

12 helical membrane-spanning segments follow: residues 10 to 30 (MEPK…WLTV), 51 to 71 (WGWA…WLVF), 92 to 112 (IFMM…SIEI), 143 to 163 (GPLP…FFFV), 195 to 215 (FYLV…TPLV), 231 to 251 (LDAI…ACGL), 263 to 283 (SYLS…SFIM), 316 to 336 (WSVF…IFLA), 347 to 367 (LCFG…TVLG), 398 to 418 (WAAL…CFIA), 446 to 466 (LLVR…LLAL), and 475 to 495 (AIIA…LSFI).

The protein belongs to the BCCT transporter (TC 2.A.15) family. CaiT subfamily. Homotrimer.

The protein resides in the cell inner membrane. The enzyme catalyses 4-(trimethylamino)butanoate(in) + (R)-carnitine(out) = 4-(trimethylamino)butanoate(out) + (R)-carnitine(in). Its pathway is amine and polyamine metabolism; carnitine metabolism. Catalyzes the exchange of L-carnitine for gamma-butyrobetaine. This chain is L-carnitine/gamma-butyrobetaine antiporter, found in Shigella dysenteriae serotype 1 (strain Sd197).